The primary structure comprises 212 residues: Large ribosomal subunit protein uL1 (212 aa).

This sequence belongs to the universal ribosomal protein uL1 family. As to quaternary structure, part of the 50S ribosomal subunit.

Binds directly to 23S rRNA. Probably involved in E site tRNA release. Its function is as follows. Protein L1 is also a translational repressor protein, it controls the translation of its operon by binding to its mRNA. In Haloferax volcanii (strain ATCC 29605 / DSM 3757 / JCM 8879 / NBRC 14742 / NCIMB 2012 / VKM B-1768 / DS2) (Halobacterium volcanii), this protein is Large ribosomal subunit protein uL1.